The chain runs to 178 residues: Large ribosomal subunit protein uL6 (178 aa).

It belongs to the universal ribosomal protein uL6 family. As to quaternary structure, part of the 50S ribosomal subunit.

This protein binds to the 23S rRNA, and is important in its secondary structure. It is located near the subunit interface in the base of the L7/L12 stalk, and near the tRNA binding site of the peptidyltransferase center. This is Large ribosomal subunit protein uL6 from Corynebacterium diphtheriae (strain ATCC 700971 / NCTC 13129 / Biotype gravis).